The following is an 81-amino-acid chain: ATP synthase subunit c (81 aa).

Transmembrane regions (helical) follow at residues isoleucine 5–glycine 25 and valine 57–alanine 77.

The protein belongs to the ATPase C chain family. As to quaternary structure, F-type ATPases have 2 components, F(1) - the catalytic core - and F(0) - the membrane proton channel. F(1) has five subunits: alpha(3), beta(3), gamma(1), delta(1), epsilon(1). F(0) has three main subunits: a(1), b(2) and c(10-14). The alpha and beta chains form an alternating ring which encloses part of the gamma chain. F(1) is attached to F(0) by a central stalk formed by the gamma and epsilon chains, while a peripheral stalk is formed by the delta and b chains.

The protein resides in the cell membrane. In terms of biological role, f(1)F(0) ATP synthase produces ATP from ADP in the presence of a proton or sodium gradient. F-type ATPases consist of two structural domains, F(1) containing the extramembraneous catalytic core and F(0) containing the membrane proton channel, linked together by a central stalk and a peripheral stalk. During catalysis, ATP synthesis in the catalytic domain of F(1) is coupled via a rotary mechanism of the central stalk subunits to proton translocation. Functionally, key component of the F(0) channel; it plays a direct role in translocation across the membrane. A homomeric c-ring of between 10-14 subunits forms the central stalk rotor element with the F(1) delta and epsilon subunits. This is ATP synthase subunit c from Mycolicibacterium gilvum (strain PYR-GCK) (Mycobacterium gilvum (strain PYR-GCK)).